We begin with the raw amino-acid sequence, 424 residues long: Gamma-glutamyl phosphate reductase (424 aa).

It belongs to the gamma-glutamyl phosphate reductase family.

It is found in the cytoplasm. The catalysed reaction is L-glutamate 5-semialdehyde + phosphate + NADP(+) = L-glutamyl 5-phosphate + NADPH + H(+). Its pathway is amino-acid biosynthesis; L-proline biosynthesis; L-glutamate 5-semialdehyde from L-glutamate: step 2/2. Its function is as follows. Catalyzes the NADPH-dependent reduction of L-glutamate 5-phosphate into L-glutamate 5-semialdehyde and phosphate. The product spontaneously undergoes cyclization to form 1-pyrroline-5-carboxylate. The polypeptide is Gamma-glutamyl phosphate reductase (Dehalococcoides mccartyi (strain CBDB1)).